A 258-amino-acid polypeptide reads, in one-letter code: Tryptophan synthase alpha chain (258 aa).

Residues Glu44 and Asp55 each act as proton acceptor in the active site.

It belongs to the TrpA family. Tetramer of two alpha and two beta chains.

It carries out the reaction (1S,2R)-1-C-(indol-3-yl)glycerol 3-phosphate + L-serine = D-glyceraldehyde 3-phosphate + L-tryptophan + H2O. It participates in amino-acid biosynthesis; L-tryptophan biosynthesis; L-tryptophan from chorismate: step 5/5. Its function is as follows. The alpha subunit is responsible for the aldol cleavage of indoleglycerol phosphate to indole and glyceraldehyde 3-phosphate. The chain is Tryptophan synthase alpha chain from Petrotoga mobilis (strain DSM 10674 / SJ95).